Reading from the N-terminus, the 790-residue chain is Pre-mRNA-splicing factor cwf3 (790 aa).

17 HAT repeats span residues 12–44, 45–77, 89–121, 123–157, 159–190, 193–228, 233–266, 268–303, 331–364, 368–402, 404–440, 457–492, 494–526, 528–562, 567–601, 639–673, and 675–709; these read DLINVDDEPFELELLRDPYSLKSWLRYIKTHEG, STLEKRVLLFERACSELPGSYKIWKSYLELRVA, EAFASVNDCFERSLILLHKMPVIWKLYLQFLMK, PNVTKIRCTFNSALRALPVTQHDDIWDMFTKYAED, GGLFCIHVYRRYIQVEPRAIENYIEILCKLGL, EAARQYEDILNRPVFLSAKRKSNYQIWLEFSELVVQ, TQNIDVEKVFRAGIKRFSDQAGKLWTYLAQYYIR, GDYEKARSTFYEGMNNIMTVRNFTIIFDAFVEFEEQ, KILDKRPLYINDVLLRQNINNVDEWLRRVKFLED, KVVQVYTDAIKNVNPKLAHGSLGKLFSEFARFYEN, DDLEQSRIIFEKATHVPYKTVNELAQVWIDWAEMELR, APRKSHISFFDESLSPQVRLHKSSKIWMYYLDLEES, GTIETTRKLYDRVFELKIATPQVVVNYANLLEE, AYFEDSFKIYERGVALFSYPVAFELWNLYLTKFVK, THMERTRDLFEQALEGCPPEFSKSIYLLYADFEEK, YGVLATRTVYEKAIESLSDSEVKDMCLRFAEMETK, and GEIDRARLIYIHGSQYCDPRVETDYWKAWQEFEIR. Positions 769–790 are disordered; the sequence is LAGFVLSKSNPQETSKITGEEN. Over residues 775–790 the composition is skewed to polar residues; it reads SKSNPQETSKITGEEN.

Belongs to the crooked-neck family. As to quaternary structure, belongs to the 40S cdc5-associated complex (or cwf complex), a spliceosome sub-complex reminiscent of a late-stage spliceosome composed of the U2, U5 and U6 snRNAs and at least brr2, cdc5, cwf2/prp3, cwf3/syf1, cwf4/syf3, cwf5/ecm2, spp42/cwf6, cwf7/spf27, cwf8, cwf9, cwf10, cwf11, cwf12, prp45/cwf13, cwf14, cwf15, cwf16, cwf17, cwf18, cwf19, cwf20, cwf21, cwf22, cwf23, cwf24, cwf25, cwf26, cyp7/cwf27, cwf28, cwf29/ist3, lea1, msl1, prp5/cwf1, prp10, prp12/sap130, prp17, prp22, sap61, sap62, sap114, sap145, slu7, smb1, smd1, smd3, smf1, smg1 and syf2.

It localises to the nucleus. In terms of biological role, involved in pre-mRNA splicing and cell cycle progression. The sequence is that of Pre-mRNA-splicing factor cwf3 (cwf3) from Schizosaccharomyces pombe (strain 972 / ATCC 24843) (Fission yeast).